Consider the following 322-residue polypeptide: Heat-inducible transcription repressor HrcA (322 aa).

The protein belongs to the HrcA family.

Functionally, negative regulator of class I heat shock genes (grpE-dnaK-dnaJ and groELS operons). Prevents heat-shock induction of these operons. This Staphylococcus carnosus (strain TM300) protein is Heat-inducible transcription repressor HrcA.